Here is a 203-residue protein sequence, read N- to C-terminus: Endo-type membrane-bound lytic murein transglycosylase A (203 aa).

A signal peptide spans 1 to 15 (MKLRWLMWLVVFLAG). Residue C16 is the site of N-palmitoyl cysteine attachment. C16 is lipidated: S-diacylglycerol cysteine.

The protein belongs to the transglycosylase Slt family.

It is found in the cell outer membrane. It carries out the reaction Endolytic cleavage of the (1-&gt;4)-beta-glycosidic linkage between N-acetylmuramic acid (MurNAc) and N-acetylglucosamine (GlcNAc) residues in peptidoglycan with concomitant formation of a 1,6-anhydrobond in the MurNAc residue.. In terms of biological role, murein-degrading enzyme. May play a role in recycling of muropeptides during cell elongation and/or cell division. Preferentially cleaves at a distance of more than two disaccharide units from the ends of the glycan chain. The protein is Endo-type membrane-bound lytic murein transglycosylase A of Cronobacter sakazakii (strain ATCC BAA-894) (Enterobacter sakazakii).